Consider the following 207-residue polypeptide: Ras-related protein Rab-5B (207 aa).

Residue glycine 2 is the site of N-myristoyl glycine attachment. Residues 41-49 (GDSGVGKSS), 60-66 (SEKHQVT), 90-94 (DTGGQ), 148-151 (NKKD), and 176-178 (SAK) contribute to the GTP site. Residues 63–71 (HQVTIGAAF) carry the Effector region motif.

It belongs to the small GTPase superfamily. Rab family. As to quaternary structure, interacts with CK1. May interact with ARF1. Myristoylation is required for cell membrane and food vacuole membrane localization. In terms of processing, may be palmitoylated on Cys-3. Post-translationally, lacks the C-terminal cysteine motifs subject to isoprenylation present in mammalian RAB5B homolog.

The protein localises to the cell membrane. The protein resides in the vacuole membrane. It localises to the vesicle. It carries out the reaction GTP + H2O = GDP + phosphate + H(+). Its activity is regulated as follows. Alternates between an inactive GDP-bound form and an active GTP-bound form. Activated by guanine nucleotide-exchange factors (GEFs) and inactivated by GTPase-activating proteins (GAPs). Small GTPase which regulates vesicle trafficking between organelles. May be involved in the trafficking of the N-myristoylated AK2 from the endoplasmic reticulum to the parasitophorous vacuole membrane. This is Ras-related protein Rab-5B from Plasmodium falciparum (isolate 3D7).